Consider the following 297-residue polypeptide: MTFPILILAAPTGAGKTSLITELDPTRFEILSFDSRQIYREMPIGTAAPTKEQQSKIRHHLVEVLSPKESIDAGLYNRMAEEALQKVLNTDKIPVFTAGTGFYLKAFLFGMFPVPEISVSVRERVLSMSIEEKKVLLNDLDPEALDKIFSGDDYRLGRALEVNLMGEKWSRLKIDPNTSAIYKYNLEIRLGIFLDLDRKELYERINLRAKRMIDLGMADEAWEIRERYGESCPGLKSLGYNFALENKKGNSNVETFLVDLSQSHRNYAKRQITWFRKENYIQAMDRSEALERIKHIK.

An ATP-binding site is contributed by 10-17; that stretch reads APTGAGKT. Substrate is bound at residue 12–17; that stretch reads TGAGKT. The interaction with substrate tRNA stretch occupies residues 34 to 37; that stretch reads DSRQ.

The protein belongs to the IPP transferase family. As to quaternary structure, monomer. It depends on Mg(2+) as a cofactor.

It carries out the reaction adenosine(37) in tRNA + dimethylallyl diphosphate = N(6)-dimethylallyladenosine(37) in tRNA + diphosphate. Catalyzes the transfer of a dimethylallyl group onto the adenine at position 37 in tRNAs that read codons beginning with uridine, leading to the formation of N6-(dimethylallyl)adenosine (i(6)A). This is tRNA dimethylallyltransferase from Leptospira interrogans serogroup Icterohaemorrhagiae serovar Lai (strain 56601).